The primary structure comprises 715 residues: Interferon-induced GTP-binding protein Mx2 (715 aa).

The region spanning 115–387 (DLALPAIAVI…LIMHIQKSLP (273 aa)) is the Dynamin-type G domain. Residues 125-132 (GDQSSGKS) are G1 motif. 125–132 (GDQSSGKS) contacts GTP. Residues 150 to 152 (VTR) form a G2 motif region. Residues 225 to 228 (DLPG) form a G3 motif region. GTP-binding positions include 225–229 (DLPGI) and 294–297 (TKPD). Residues 294-297 (TKPD) are G4 motif. The G5 motif stretch occupies residues 326–329 (KCRG). The GED domain maps to 623-714 (FTEIGIHLNA…ALCQFSSKEI (92 aa)).

It belongs to the TRAFAC class dynamin-like GTPase superfamily. Dynamin/Fzo/YdjA family.

Its subcellular location is the cytoplasm. The protein resides in the nucleus. The protein localises to the nuclear pore complex. Interferon-induced dynamin-like GTPase with potent antiviral activity against human immunodeficiency virus type 1 (HIV-1). Acts by targeting the viral capsid and affects the nuclear uptake and/or stability of the HIV-1 replication complex and the subsequent chromosomal integration of the proviral DNA. Exhibits antiviral activity also against simian immunodeficiency virus (SIV-mnd). May play a role in regulating nucleocytoplasmic transport and cell-cycle progression. The polypeptide is Interferon-induced GTP-binding protein Mx2 (MX2) (Homo sapiens (Human)).